Consider the following 171-residue polypeptide: Photosystem I assembly protein Ycf3 (171 aa).

TPR repeat units lie at residues 33-66, 70-103, and 118-151; these read AFSY…EEDP, SYIL…NSRL, and GTKS…APNN.

This sequence belongs to the Ycf3 family.

It is found in the plastid. The protein localises to the chloroplast thylakoid membrane. Essential for the assembly of the photosystem I (PSI) complex. May act as a chaperone-like factor to guide the assembly of the PSI subunits. The sequence is that of Photosystem I assembly protein Ycf3 from Emiliania huxleyi (Coccolithophore).